A 348-amino-acid chain; its full sequence is Calcium/calmodulin-dependent protein kinase type 1 (348 aa).

The Nuclear localization signal 1 signature appears at 7–22 (RDGSGPAPNATIREKY). The Protein kinase domain maps to 22 to 278 (YDFRDVLGTG…CQDALSHPWI (257 aa)). Residues 28-36 (LGTGAFSKV) and K52 each bind ATP. The Nuclear localization signal 2 signature appears at 71-78 (KVLRKLRH). Catalysis depends on D144, which acts as the Proton acceptor. T179 carries the post-translational modification Phosphothreonine; by ckk-1. The autoinhibitory domain stretch occupies residues 278 to 318 (ISGNTAYTHDIHGTVAVHLKKSLAKRNWKKAYNAAAAIRQL). The Nuclear export sequence signature appears at 288-294 (IHGTVAV). The Nuclear localization signal 3 motif lies at 297-307 (KKSLAKRNWKK). Residues 298–319 (KSLAKRNWKKAYNAAAAIRQLQ) form a calmodulin-binding region. Polar residues predominate over residues 327–338 (SNRLQKQASQQQ). The disordered stretch occupies residues 327 to 348 (SNRLQKQASQQQPEPPTPAFHA). Pro residues predominate over residues 339-348 (PEPPTPAFHA).

This sequence belongs to the protein kinase superfamily. CAMK Ser/Thr protein kinase family. CaMK subfamily. In terms of assembly, interacts with importin ima-3; affinity for ima-3 is increased in the presence of Ca(2+) and calmodulin and leads to increased nuclear accumulation of cmk-1 in FLP neurons upon prolonged heat activation. The cofactor is Mg(2+). In terms of processing, phosphorylation at Thr-179 can promote both nuclear export and import, sustaining nucleocytoplasmic shuttling. As to expression, expressed in head and tail neurons and vulval muscles. Throughout the nervous system. Detected in neurites and neuronal cell bodies. Expressed in the mechanosensory neurons, AVM and ALM, and in the interneurons, AVA, AVB and AVD. Expressed in the right and left ASE neurons where it functions cell-autonomously to control salt-avoidance learning. Expressed in FLP and AFD thermosensory neurons.

It localises to the nucleus. It is found in the cytoplasm. It carries out the reaction L-seryl-[protein] + ATP = O-phospho-L-seryl-[protein] + ADP + H(+). The catalysed reaction is L-threonyl-[protein] + ATP = O-phospho-L-threonyl-[protein] + ADP + H(+). Activated by Ca(2+)/calmodulin. Binding of calmodulin results in a conformational change that generates functional binding sites for both substrate and ATP, and thus relieves autoinhibition and lowers the Km of substrate binding. Must be phosphorylated by ckk-1 to be maximally active but this does not appear to be required for activity in AFD neurons. Calcium/calmodulin-dependent protein kinase that operates in the calcium-triggered CaMKK-CaMK1 signaling cascade which results in transcriptional activation. Transcriptional activation occurs at least in part through phosphorylation of crh-1. Regulates gene expression, sensory morphology, and function of the AFD thermosensory neurons. Involved in long-term adaptation of AFD neurons to temperatures warmer than the initial acclimatized cultivation temperature. Acts in the FLP thermal nociceptors to moderate the responsiveness to noxious heat and controls neuropeptide release from FLP neurons in response to temperature elevations. Regulates the dauer decision, the decision of the larvae to enter into the alternative stress-resistant and long-lived dauer developmental stage, based on the feeding state, primarily in the AWC sensory neurons. Acts non cell-autonomously in the AWC neurons to regulate expression of the daf-28 insulin-like peptide and cell-autonomously in the ASI sensory neurons to regulate expression of the growth promoting daf-7 in a food-regulated manner. Plays a role in memory-based thermal response of an individual AFD neuron cell. Influences habituation and sensitivity to repeated mechanosensory stimuli. Involved in chemotaxis response in AWC neurons to attractant 2-heptanone, a volatile organic compound emitted by the nematode pathogenic bacterium B.nematocida B16. Acts in the ASE salt-sensing neurons to promote a type of aversive gustatory-associated learning called salt-avoidance learning via regulation of crh-1 signaling and the promotion of long-term memory formation, but is not involved in salt attraction. Represses transcription of glutamate receptor glr-1 in the nucleus basally and in response to changes in synaptic activity. This chain is Calcium/calmodulin-dependent protein kinase type 1, found in Caenorhabditis elegans.